A 118-amino-acid chain; its full sequence is Protein TusC (118 aa).

It belongs to the DsrF/TusC family. In terms of assembly, heterohexamer, formed by a dimer of trimers. The hexameric TusBCD complex contains 2 copies each of TusB, TusC and TusD. The TusBCD complex interacts with TusE.

Its subcellular location is the cytoplasm. In terms of biological role, part of a sulfur-relay system required for 2-thiolation of 5-methylaminomethyl-2-thiouridine (mnm(5)s(2)U) at tRNA wobble positions. This chain is Protein TusC, found in Salmonella arizonae (strain ATCC BAA-731 / CDC346-86 / RSK2980).